The sequence spans 125 residues: Succinate dehydrogenase assembly factor 3, mitochondrial (125 aa).

A mitochondrion-targeting transit peptide spans 1–30; it reads MPGKHVSRVRALYRRILLLHRALPPDLKAL.

The protein belongs to the complex I LYR family. SDHAF3 subfamily. As to quaternary structure, interacts with Sdhb within an Sdha-Sdhb subcomplex.

It is found in the mitochondrion matrix. Functionally, plays an essential role in the assembly of succinate dehydrogenase (SDH), an enzyme complex (also referred to as respiratory complex II) that is a component of both the tricarboxylic acid (TCA) cycle and the mitochondrial electron transport chain, and which couples the oxidation of succinate to fumarate with the reduction of ubiquinone (coenzyme Q) to ubiquinol. Promotes maturation of the iron-sulfur protein subunit Sdhb of the SDH catalytic dimer, protecting it from the deleterious effects of oxidants. May act together with SDHAF1. The protein is Succinate dehydrogenase assembly factor 3, mitochondrial of Mus musculus (Mouse).